A 227-amino-acid chain; its full sequence is Cytochrome c oxidase subunit 2 (227 aa).

The Mitochondrial intermembrane portion of the chain corresponds to 1–14; that stretch reads MAYPMQLGFQDATS. Residues 15 to 45 form a helical membrane-spanning segment; that stretch reads PIMEELLHFHDHTLMIVFLISSLVLYIISLM. Residues 46–59 lie on the Mitochondrial matrix side of the membrane; the sequence is LTTKLTHTSTMDAQ. The chain crosses the membrane as a helical span at residues 60-87; the sequence is EVETIWTILPAIILILIALPSLRILYMM. At 88-227 the chain is on the mitochondrial intermembrane side; the sequence is DEINNPSLTV…YFEKWSASML (140 aa). Residues His161, Cys196, Glu198, Cys200, His204, and Met207 each contribute to the Cu cation site. Glu198 is a binding site for Mg(2+). Tyr218 is subject to Phosphotyrosine.

The protein belongs to the cytochrome c oxidase subunit 2 family. Component of the cytochrome c oxidase (complex IV, CIV), a multisubunit enzyme composed of 14 subunits. The complex is composed of a catalytic core of 3 subunits MT-CO1, MT-CO2 and MT-CO3, encoded in the mitochondrial DNA, and 11 supernumerary subunits COX4I, COX5A, COX5B, COX6A, COX6B, COX6C, COX7A, COX7B, COX7C, COX8 and NDUFA4, which are encoded in the nuclear genome. The complex exists as a monomer or a dimer and forms supercomplexes (SCs) in the inner mitochondrial membrane with NADH-ubiquinone oxidoreductase (complex I, CI) and ubiquinol-cytochrome c oxidoreductase (cytochrome b-c1 complex, complex III, CIII), resulting in different assemblies (supercomplex SCI(1)III(2)IV(1) and megacomplex MCI(2)III(2)IV(2)). Found in a complex with TMEM177, COA6, COX18, COX20, SCO1 and SCO2. Interacts with TMEM177 in a COX20-dependent manner. Interacts with COX20. Interacts with COX16. It depends on Cu cation as a cofactor.

Its subcellular location is the mitochondrion inner membrane. It catalyses the reaction 4 Fe(II)-[cytochrome c] + O2 + 8 H(+)(in) = 4 Fe(III)-[cytochrome c] + 2 H2O + 4 H(+)(out). Functionally, component of the cytochrome c oxidase, the last enzyme in the mitochondrial electron transport chain which drives oxidative phosphorylation. The respiratory chain contains 3 multisubunit complexes succinate dehydrogenase (complex II, CII), ubiquinol-cytochrome c oxidoreductase (cytochrome b-c1 complex, complex III, CIII) and cytochrome c oxidase (complex IV, CIV), that cooperate to transfer electrons derived from NADH and succinate to molecular oxygen, creating an electrochemical gradient over the inner membrane that drives transmembrane transport and the ATP synthase. Cytochrome c oxidase is the component of the respiratory chain that catalyzes the reduction of oxygen to water. Electrons originating from reduced cytochrome c in the intermembrane space (IMS) are transferred via the dinuclear copper A center (CU(A)) of subunit 2 and heme A of subunit 1 to the active site in subunit 1, a binuclear center (BNC) formed by heme A3 and copper B (CU(B)). The BNC reduces molecular oxygen to 2 water molecules using 4 electrons from cytochrome c in the IMS and 4 protons from the mitochondrial matrix. This chain is Cytochrome c oxidase subunit 2 (MT-CO2), found in Syncerus caffer (African buffalo).